The primary structure comprises 90 residues: Probable Fe(2+)-trafficking protein (90 aa).

It belongs to the Fe(2+)-trafficking protein family.

Could be a mediator in iron transactions between iron acquisition and iron-requiring processes, such as synthesis and/or repair of Fe-S clusters in biosynthetic enzymes. The polypeptide is Probable Fe(2+)-trafficking protein (Aliivibrio fischeri (strain ATCC 700601 / ES114) (Vibrio fischeri)).